A 228-amino-acid polypeptide reads, in one-letter code: Clathrin light chain B (228 aa).

Methionine 1 bears the Blocked amino end (Met) mark. The span at 1 to 17 (MADDFGFFSSSESGAPE) shows a compositional bias: low complexity. Residues 1–80 (MADDFGFFSS…VNGDVFQEAN (80 aa)) form a disordered region. A phosphoserine mark is found at serine 11 and serine 13. The tract at residues 92 to 154 (ADRLTQEPES…QVEKNKINNR (63 aa)) is involved in binding clathrin heavy chain. Phosphothreonine is present on threonine 186. A disulfide bridge links cysteine 198 with cysteine 208. An N6-acetyllysine modification is found at lysine 203. Serine 216 carries the phosphoserine modification.

Belongs to the clathrin light chain family. Clathrin coats are formed from molecules containing 3 heavy chains and 3 light chains. Interacts (via N-terminus) with HIP1. Interacts with HIP1R.

The protein resides in the cytoplasmic vesicle membrane. Its subcellular location is the membrane. It is found in the coated pit. Clathrin is the major protein of the polyhedral coat of coated pits and vesicles. In Bos taurus (Bovine), this protein is Clathrin light chain B (CLTB).